The chain runs to 316 residues: L-lactate dehydrogenase (316 aa).

Residues V15, D37, K42, Y68, and 82–83 each bind NAD(+); that span reads GL. Residues Q85, R91, and 123–126 each bind substrate; that span reads NPVD. NAD(+)-binding positions include 121–123 and T146; that span reads ASN. 151–154 contributes to the substrate binding site; sequence DTSR. Positions 156 and 171 each coordinate beta-D-fructose 1,6-bisphosphate. The active-site Proton acceptor is H178. A Phosphotyrosine modification is found at Y222. T231 provides a ligand contact to substrate.

The protein belongs to the LDH/MDH superfamily. LDH family. Homotetramer.

Its subcellular location is the cytoplasm. The catalysed reaction is (S)-lactate + NAD(+) = pyruvate + NADH + H(+). It functions in the pathway fermentation; pyruvate fermentation to lactate; (S)-lactate from pyruvate: step 1/1. Its activity is regulated as follows. Allosterically activated by fructose 1,6-bisphosphate (FBP). Catalyzes the conversion of lactate to pyruvate. This is L-lactate dehydrogenase from Borreliella burgdorferi (strain ATCC 35210 / DSM 4680 / CIP 102532 / B31) (Borrelia burgdorferi).